Reading from the N-terminus, the 213-residue chain is Uridine kinase (213 aa).

13 to 20 (GGSCSGKT) lines the ATP pocket.

It belongs to the uridine kinase family.

It localises to the cytoplasm. The catalysed reaction is uridine + ATP = UMP + ADP + H(+). It catalyses the reaction cytidine + ATP = CMP + ADP + H(+). Its pathway is pyrimidine metabolism; CTP biosynthesis via salvage pathway; CTP from cytidine: step 1/3. The protein operates within pyrimidine metabolism; UMP biosynthesis via salvage pathway; UMP from uridine: step 1/1. This is Uridine kinase (udk) from Mycoplasma pneumoniae (strain ATCC 29342 / M129 / Subtype 1) (Mycoplasmoides pneumoniae).